Consider the following 434-residue polypeptide: Enolase (434 aa).

Residues histidine 158 and glutamate 167 each coordinate substrate. The active-site Proton donor is glutamate 210. Mg(2+) contacts are provided by aspartate 245, glutamate 294, and aspartate 319. Glutamate 294 and aspartate 319 together coordinate substrate. Lysine 344 serves as the catalytic Proton acceptor. Substrate is bound by residues 371–374 (SHRS) and lysine 395.

It belongs to the enolase family. In terms of assembly, homodimer. Mg(2+) is required as a cofactor.

The protein resides in the cytoplasm. The enzyme catalyses (2R)-2-phosphoglycerate = phosphoenolpyruvate + H2O. It participates in carbohydrate degradation; glycolysis; pyruvate from D-glyceraldehyde 3-phosphate: step 4/5. The polypeptide is Enolase (ENO) (Schistosoma japonicum (Blood fluke)).